The chain runs to 512 residues: ATP synthase subunit alpha (512 aa).

169–176 (GDRQTGKT) is an ATP binding site.

It belongs to the ATPase alpha/beta chains family. F-type ATPases have 2 components, CF(1) - the catalytic core - and CF(0) - the membrane proton channel. CF(1) has five subunits: alpha(3), beta(3), gamma(1), delta(1), epsilon(1). CF(0) has four main subunits: a(1), b(1), b'(1) and c(9-12).

Its subcellular location is the cell inner membrane. The enzyme catalyses ATP + H2O + 4 H(+)(in) = ADP + phosphate + 5 H(+)(out). In terms of biological role, produces ATP from ADP in the presence of a proton gradient across the membrane. The alpha chain is a regulatory subunit. The polypeptide is ATP synthase subunit alpha (Roseobacter denitrificans (strain ATCC 33942 / OCh 114) (Erythrobacter sp. (strain OCh 114))).